Reading from the N-terminus, the 158-residue chain is Large ribosomal subunit protein uL11 (158 aa).

This sequence belongs to the universal ribosomal protein uL11 family. Part of the ribosomal stalk of the 50S ribosomal subunit. Interacts with L10 and the large rRNA to form the base of the stalk. L10 forms an elongated spine to which L12 dimers bind in a sequential fashion forming a multimeric L10(L12)X complex.

Its function is as follows. Forms part of the ribosomal stalk which helps the ribosome interact with GTP-bound translation factors. This Methanospirillum hungatei JF-1 (strain ATCC 27890 / DSM 864 / NBRC 100397 / JF-1) protein is Large ribosomal subunit protein uL11.